The sequence spans 131 residues: Small ribosomal subunit protein uS8 (131 aa).

The protein belongs to the universal ribosomal protein uS8 family. As to quaternary structure, part of the 30S ribosomal subunit. Contacts proteins S5 and S12.

Its function is as follows. One of the primary rRNA binding proteins, it binds directly to 16S rRNA central domain where it helps coordinate assembly of the platform of the 30S subunit. This Rhizorhabdus wittichii (strain DSM 6014 / CCUG 31198 / JCM 15750 / NBRC 105917 / EY 4224 / RW1) (Sphingomonas wittichii) protein is Small ribosomal subunit protein uS8.